The following is a 248-amino-acid chain: MAKISSASCFRAIFLGALIILCLPHPSTGVPLEELERAIAILRVRGRALFANAIITSDLLFDLLSDESLTLFAPTDSMLFDLDMTHSLPFYVSTLRLHSVPLRLSLSGLRSLPNSSSLPTLLPSHRLLLTKHSSSNDSIFLDGVQLLIPGLFDGQHIAVHGLADLLPLTAPSSPNRLVEDSTALAKSPWFLGSRFSPAPEPYFAFMDLSPAESPSVEEVSPSPSWGEGEEDFIVGDEGGPLDGRNNGF.

The signal sequence occupies residues 1–29; that stretch reads MAKISSASCFRAIFLGALIILCLPHPSTG. An FAS1 domain is found at 35 to 166; it reads LERAIAILRV…IAVHGLADLL (132 aa). 2 N-linked (GlcNAc...) asparagine glycosylation sites follow: N114 and N136. Residues 213-226 show a composition bias toward low complexity; the sequence is SPSVEEVSPSPSWG. Residues 213-248 form a disordered region; the sequence is SPSVEEVSPSPSWGEGEEDFIVGDEGGPLDGRNNGF.

Belongs to the fasciclin-like AGP family.

It is found in the secreted. May be a cell surface adhesion protein. The chain is Fasciclin-like arabinogalactan protein 19 (FLA19) from Arabidopsis thaliana (Mouse-ear cress).